Consider the following 245-residue polypeptide: Probable septum site-determining protein MinC (245 aa).

The segment covering Arg-113–Pro-132 has biased composition (basic and acidic residues). Residues Arg-113–Pro-138 are disordered.

This sequence belongs to the MinC family. Interacts with MinD and FtsZ.

Its function is as follows. Cell division inhibitor that blocks the formation of polar Z ring septums. Rapidly oscillates between the poles of the cell to destabilize FtsZ filaments that have formed before they mature into polar Z rings. Prevents FtsZ polymerization. The protein is Probable septum site-determining protein MinC of Pseudomonas fluorescens (strain SBW25).